We begin with the raw amino-acid sequence, 490 residues long: Bifunctional protein HldE (490 aa).

Residues 1-328 are ribokinase; it reads MFSFDALLQA…LRRRILPHAS (328 aa). 205-208 serves as a coordination point for ATP; it reads NRKE. The active site involves Asp-275. Residues 358–490 form a cytidylyltransferase region; that stretch reads FTNGCFDILH…LVARAREGQS (133 aa).

It in the N-terminal section; belongs to the carbohydrate kinase PfkB family. This sequence in the C-terminal section; belongs to the cytidylyltransferase family. In terms of assembly, homodimer.

It carries out the reaction D-glycero-beta-D-manno-heptose 7-phosphate + ATP = D-glycero-beta-D-manno-heptose 1,7-bisphosphate + ADP + H(+). The enzyme catalyses D-glycero-beta-D-manno-heptose 1-phosphate + ATP + H(+) = ADP-D-glycero-beta-D-manno-heptose + diphosphate. The protein operates within nucleotide-sugar biosynthesis; ADP-L-glycero-beta-D-manno-heptose biosynthesis; ADP-L-glycero-beta-D-manno-heptose from D-glycero-beta-D-manno-heptose 7-phosphate: step 1/4. It participates in nucleotide-sugar biosynthesis; ADP-L-glycero-beta-D-manno-heptose biosynthesis; ADP-L-glycero-beta-D-manno-heptose from D-glycero-beta-D-manno-heptose 7-phosphate: step 3/4. Its function is as follows. Catalyzes the phosphorylation of D-glycero-D-manno-heptose 7-phosphate at the C-1 position to selectively form D-glycero-beta-D-manno-heptose-1,7-bisphosphate. Functionally, catalyzes the ADP transfer from ATP to D-glycero-beta-D-manno-heptose 1-phosphate, yielding ADP-D-glycero-beta-D-manno-heptose. This chain is Bifunctional protein HldE, found in Rhodopseudomonas palustris (strain TIE-1).